Reading from the N-terminus, the 443-residue chain is Ribulose bisphosphate carboxylase large chain (443 aa).

The residue at position 7 (Lys-7) is an N6,N6,N6-trimethyllysine. Asn-116 and Thr-166 together coordinate substrate. Lys-168 (proton acceptor) is an active-site residue. Residue Lys-170 coordinates substrate. Mg(2+) is bound by residues Lys-194, Asp-196, and Glu-197. An N6-carboxylysine modification is found at Lys-194. His-287 serves as the catalytic Proton acceptor. 3 residues coordinate substrate: Arg-288, His-320, and Ser-372.

It belongs to the RuBisCO large chain family. Type I subfamily. As to quaternary structure, heterohexadecamer of 8 large chains and 8 small chains; disulfide-linked. The disulfide link is formed within the large subunit homodimers. Requires Mg(2+) as cofactor. In terms of processing, the disulfide bond which can form in the large chain dimeric partners within the hexadecamer appears to be associated with oxidative stress and protein turnover.

The protein resides in the plastid. The protein localises to the chloroplast. It catalyses the reaction 2 (2R)-3-phosphoglycerate + 2 H(+) = D-ribulose 1,5-bisphosphate + CO2 + H2O. The enzyme catalyses D-ribulose 1,5-bisphosphate + O2 = 2-phosphoglycolate + (2R)-3-phosphoglycerate + 2 H(+). Its function is as follows. RuBisCO catalyzes two reactions: the carboxylation of D-ribulose 1,5-bisphosphate, the primary event in carbon dioxide fixation, as well as the oxidative fragmentation of the pentose substrate in the photorespiration process. Both reactions occur simultaneously and in competition at the same active site. The sequence is that of Ribulose bisphosphate carboxylase large chain from Abies homolepis (Nikko fir).